Consider the following 427-residue polypeptide: Trigger factor (427 aa).

The 86-residue stretch at 163 to 248 (GDIAVIDFKG…IKSIKVKELP (86 aa)) folds into the PPIase FKBP-type domain.

Belongs to the FKBP-type PPIase family. Tig subfamily.

It is found in the cytoplasm. It catalyses the reaction [protein]-peptidylproline (omega=180) = [protein]-peptidylproline (omega=0). In terms of biological role, involved in protein export. Acts as a chaperone by maintaining the newly synthesized protein in an open conformation. Functions as a peptidyl-prolyl cis-trans isomerase. The chain is Trigger factor from Clostridium beijerinckii (strain ATCC 51743 / NCIMB 8052) (Clostridium acetobutylicum).